A 442-amino-acid chain; its full sequence is Histidine--tRNA ligase (442 aa).

It belongs to the class-II aminoacyl-tRNA synthetase family. In terms of assembly, homodimer.

It localises to the cytoplasm. The catalysed reaction is tRNA(His) + L-histidine + ATP = L-histidyl-tRNA(His) + AMP + diphosphate + H(+). In Treponema pallidum (strain Nichols), this protein is Histidine--tRNA ligase (hisS).